The sequence spans 1939 residues: Myosin-2 (1939 aa).

One can recognise a Myosin N-terminal SH3-like domain in the interval 33–82; sequence DAKTSVFVAEPKESFVKGTIQSREGGKVTVKTEAGATLTVKEDQVFPMNP. T64 and T69 each carry phosphothreonine. The Myosin motor domain maps to 86-782; it reads DKIEDMAMMT…LLGLLEEMRD (697 aa). The residue at position 130 (K130) is an N6,N6,N6-trimethyllysine. 179-186 is a binding site for ATP; that stretch reads GESGAGKT. Y389 is modified (phosphotyrosine). Phosphoserine is present on S392. Residue T419 is modified to Phosphothreonine. S625 bears the Phosphoserine mark. The tract at residues 659-681 is actin-binding; sequence LNKLMTNLRSTHPHFVRCIIPNE. H757 is modified (pros-methylhistidine). Positions 761-775 are actin-binding; that stretch reads KFGHTKVFFKAGLLG. Positions 785–814 constitute an IQ domain; it reads LAQLITRTQARCRGFLARVEYQKMVERRES. A coiled-coil region spans residues 843-1939; it reads LLKSAESEKE…EVHTKVISEE (1097 aa). Residues S1092 and S1096 each carry the phosphoserine modification. 2 disordered regions span residues 1126-1147 and 1153-1172; these read IEAERASRAKAEKQRSDLSREL and RLEEAGGATSAQIEMNKKRE. The segment covering 1128 to 1147 has biased composition (basic and acidic residues); the sequence is AERASRAKAEKQRSDLSREL. Phosphoserine occurs at positions 1162 and 1237. Residue T1241 is modified to Phosphothreonine. At S1243 the chain carries Phosphoserine. Residue T1255 is modified to Phosphothreonine. S1261 is modified (phosphoserine). At T1286 the chain carries Phosphothreonine. Phosphoserine occurs at positions 1288, 1292, 1303, and 1306. Phosphotyrosine is present on Y1464. T1467 is modified (phosphothreonine). The residue at position 1474 (S1474) is a Phosphoserine. Y1492 is subject to Phosphotyrosine. A Phosphoserine modification is found at S1495. T1501 carries the post-translational modification Phosphothreonine. S1514 carries the phosphoserine modification. T1517 is subject to Phosphothreonine. S1542, S1554, S1574, S1600, S1603, S1714, and S1726 each carry phosphoserine. Residues T1730 and T1736 each carry the phosphothreonine modification. S1739 carries the post-translational modification Phosphoserine. The disordered stretch occupies residues 1885 to 1915; it reads QAEEAEEQSNTNLSKFRKLQHELEEAEERAD.

This sequence belongs to the TRAFAC class myosin-kinesin ATPase superfamily. Myosin family. Muscle myosin is a hexameric protein that consists of 2 heavy chain subunits (MHC), 2 alkali light chain subunits (MLC) and 2 regulatory light chain subunits (MLC-2). Interacts with GCSAM.

It is found in the cytoplasm. The protein localises to the myofibril. Functionally, myosins are actin-based motor molecules with ATPase activity essential for muscle contraction. This chain is Myosin-2 (MYH2), found in Sus scrofa (Pig).